The following is a 256-amino-acid chain: Thiazole synthase (256 aa).

The active-site Schiff-base intermediate with DXP is the Lys-95. 1-deoxy-D-xylulose 5-phosphate-binding positions include Gly-156, 182 to 183 (AG), and 204 to 205 (NT).

The protein belongs to the ThiG family. In terms of assembly, homotetramer. Forms heterodimers with either ThiH or ThiS.

Its subcellular location is the cytoplasm. It catalyses the reaction [ThiS sulfur-carrier protein]-C-terminal-Gly-aminoethanethioate + 2-iminoacetate + 1-deoxy-D-xylulose 5-phosphate = [ThiS sulfur-carrier protein]-C-terminal Gly-Gly + 2-[(2R,5Z)-2-carboxy-4-methylthiazol-5(2H)-ylidene]ethyl phosphate + 2 H2O + H(+). The protein operates within cofactor biosynthesis; thiamine diphosphate biosynthesis. Catalyzes the rearrangement of 1-deoxy-D-xylulose 5-phosphate (DXP) to produce the thiazole phosphate moiety of thiamine. Sulfur is provided by the thiocarboxylate moiety of the carrier protein ThiS. In vitro, sulfur can be provided by H(2)S. The chain is Thiazole synthase from Photobacterium profundum (strain SS9).